Reading from the N-terminus, the 395-residue chain is F-box only protein 7 (395 aa).

One can recognise an F-box domain in the interval 19–70; the sequence is NHDWSKLCPDILRKIIESLSSLDFYRAKIVCSDWYSVWKTCVKRPLRPWRII.

The polypeptide is F-box only protein 7 (FBX7) (Arabidopsis thaliana (Mouse-ear cress)).